Here is a 118-residue protein sequence, read N- to C-terminus: uncharacterized protein (118 aa).

Residues 1 to 12 (MADDNVSFTDQG) show a composition bias toward polar residues. A disordered region spans residues 1–63 (MADDNVSFTD…KKGKTKKVRK (63 aa)). Basic residues predominate over residues 39 to 63 (TKKKGKKNKKSKKKAKKGKTKKVRK). The chain crosses the membrane as a helical span at residues 81 to 101 (FCAGIIVAMIMLFVIIIYGII).

The protein resides in the membrane. This is an uncharacterized protein from Caenorhabditis elegans.